Here is a 198-residue protein sequence, read N- to C-terminus: Holliday junction branch migration complex subunit RuvA (198 aa).

The interval 1–64 (MIAHLRGTLL…EDAIALFGFL (64 aa)) is domain I. The tract at residues 65–141 (DREEKRLFER…LDDLIAAAPA (77 aa)) is domain II. The flexible linker stretch occupies residues 141 to 145 (AAGPV). Residues 146-198 (AAGPAAEDVLSALLNLGYQRPAALKAIETAVEKDAAAGEDFDLLFRAALKLIR) form a domain III region.

The protein belongs to the RuvA family. In terms of assembly, homotetramer. Forms an RuvA(8)-RuvB(12)-Holliday junction (HJ) complex. HJ DNA is sandwiched between 2 RuvA tetramers; dsDNA enters through RuvA and exits via RuvB. An RuvB hexamer assembles on each DNA strand where it exits the tetramer. Each RuvB hexamer is contacted by two RuvA subunits (via domain III) on 2 adjacent RuvB subunits; this complex drives branch migration. In the full resolvosome a probable DNA-RuvA(4)-RuvB(12)-RuvC(2) complex forms which resolves the HJ.

The protein localises to the cytoplasm. Functionally, the RuvA-RuvB-RuvC complex processes Holliday junction (HJ) DNA during genetic recombination and DNA repair, while the RuvA-RuvB complex plays an important role in the rescue of blocked DNA replication forks via replication fork reversal (RFR). RuvA specifically binds to HJ cruciform DNA, conferring on it an open structure. The RuvB hexamer acts as an ATP-dependent pump, pulling dsDNA into and through the RuvAB complex. HJ branch migration allows RuvC to scan DNA until it finds its consensus sequence, where it cleaves and resolves the cruciform DNA. The sequence is that of Holliday junction branch migration complex subunit RuvA from Acidobacterium capsulatum (strain ATCC 51196 / DSM 11244 / BCRC 80197 / JCM 7670 / NBRC 15755 / NCIMB 13165 / 161).